Reading from the N-terminus, the 352-residue chain is uncharacterized protein (352 aa).

The stretch at F285–R352 forms a coiled coil.

This is an uncharacterized protein from Emericella nidulans (strain FGSC A4 / ATCC 38163 / CBS 112.46 / NRRL 194 / M139) (Aspergillus nidulans).